Here is a 570-residue protein sequence, read N- to C-terminus: Phosphoenolpyruvate-protein phosphotransferase (570 aa).

His189 serves as the catalytic Tele-phosphohistidine intermediate. Residues Arg296 and Arg332 each contribute to the phosphoenolpyruvate site. Positions 431 and 455 each coordinate Mg(2+). Residues 454 to 455 and Arg465 contribute to the phosphoenolpyruvate site; that span reads ND. Cys502 functions as the Proton donor in the catalytic mechanism.

It belongs to the PEP-utilizing enzyme family. In terms of assembly, homodimer. Interacts with FloT. Mg(2+) is required as a cofactor.

It is found in the cytoplasm. It localises to the membrane raft. It carries out the reaction L-histidyl-[protein] + phosphoenolpyruvate = N(pros)-phospho-L-histidyl-[protein] + pyruvate. Its function is as follows. General (non sugar-specific) component of the phosphoenolpyruvate-dependent sugar phosphotransferase system (sugar PTS). This major carbohydrate active-transport system catalyzes the phosphorylation of incoming sugar substrates concomitantly with their translocation across the cell membrane. Enzyme I transfers the phosphoryl group from phosphoenolpyruvate (PEP) to the phosphoryl carrier protein (HPr). The polypeptide is Phosphoenolpyruvate-protein phosphotransferase (ptsI) (Bacillus subtilis (strain 168)).